Reading from the N-terminus, the 115-residue chain is Large ribosomal subunit protein bL19 (115 aa).

It belongs to the bacterial ribosomal protein bL19 family.

In terms of biological role, this protein is located at the 30S-50S ribosomal subunit interface and may play a role in the structure and function of the aminoacyl-tRNA binding site. The sequence is that of Large ribosomal subunit protein bL19 from Francisella tularensis subsp. mediasiatica (strain FSC147).